Here is a 456-residue protein sequence, read N- to C-terminus: tRNA modification GTPase MnmE (456 aa).

Residues Arg-24, Glu-81, and Lys-120 each contribute to the (6S)-5-formyl-5,6,7,8-tetrahydrofolate site. The TrmE-type G domain occupies 216 to 379; that stretch reads GMTVVIAGRP…LRDHLKACMG (164 aa). Residue Asn-226 coordinates K(+). Residues 226 to 231, 245 to 251, 270 to 273, and 335 to 338 each bind GTP; these read NAGKSS, TDIAGTT, DTAG, and NKAD. Ser-230 provides a ligand contact to Mg(2+). Residues Thr-245, Ile-247, and Thr-250 each coordinate K(+). Residue Thr-251 participates in Mg(2+) binding. (6S)-5-formyl-5,6,7,8-tetrahydrofolate is bound at residue Lys-456.

The protein belongs to the TRAFAC class TrmE-Era-EngA-EngB-Septin-like GTPase superfamily. TrmE GTPase family. Homodimer. Heterotetramer of two MnmE and two MnmG subunits. K(+) is required as a cofactor.

The protein localises to the cytoplasm. Exhibits a very high intrinsic GTPase hydrolysis rate. Involved in the addition of a carboxymethylaminomethyl (cmnm) group at the wobble position (U34) of certain tRNAs, forming tRNA-cmnm(5)s(2)U34. The chain is tRNA modification GTPase MnmE from Pseudomonas putida (strain GB-1).